The chain runs to 180 residues: Acireductone dioxygenase (180 aa).

Fe(2+) is bound by residues His99, His101, Glu105, and His145. Ni(2+) contacts are provided by His99, His101, Glu105, and His145.

Belongs to the acireductone dioxygenase (ARD) family. Monomer. The cofactor is Fe(2+). Requires Ni(2+) as cofactor.

It carries out the reaction 1,2-dihydroxy-5-(methylsulfanyl)pent-1-en-3-one + O2 = 3-(methylsulfanyl)propanoate + CO + formate + 2 H(+). The catalysed reaction is 1,2-dihydroxy-5-(methylsulfanyl)pent-1-en-3-one + O2 = 4-methylsulfanyl-2-oxobutanoate + formate + 2 H(+). Its pathway is amino-acid biosynthesis; L-methionine biosynthesis via salvage pathway; L-methionine from S-methyl-5-thio-alpha-D-ribose 1-phosphate: step 5/6. Catalyzes 2 different reactions between oxygen and the acireductone 1,2-dihydroxy-3-keto-5-methylthiopentene (DHK-MTPene) depending upon the metal bound in the active site. Fe-containing acireductone dioxygenase (Fe-ARD) produces formate and 2-keto-4-methylthiobutyrate (KMTB), the alpha-ketoacid precursor of methionine in the methionine recycle pathway. Ni-containing acireductone dioxygenase (Ni-ARD) produces methylthiopropionate, carbon monoxide and formate, and does not lie on the methionine recycle pathway. In Geobacillus kaustophilus (strain HTA426), this protein is Acireductone dioxygenase.